Consider the following 301-residue polypeptide: Homoserine O-acetyltransferase (301 aa).

The active-site Acyl-thioester intermediate is the cysteine 142. Residues lysine 163 and serine 192 each contribute to the substrate site. Histidine 235 acts as the Proton acceptor in catalysis. The active site involves glutamate 237. Substrate is bound at residue arginine 249.

This sequence belongs to the MetA family.

Its subcellular location is the cytoplasm. The enzyme catalyses L-homoserine + acetyl-CoA = O-acetyl-L-homoserine + CoA. The protein operates within amino-acid biosynthesis; L-methionine biosynthesis via de novo pathway; O-acetyl-L-homoserine from L-homoserine: step 1/1. Transfers an acetyl group from acetyl-CoA to L-homoserine, forming acetyl-L-homoserine. In Bacillus cereus (strain ATCC 14579 / DSM 31 / CCUG 7414 / JCM 2152 / NBRC 15305 / NCIMB 9373 / NCTC 2599 / NRRL B-3711), this protein is Homoserine O-acetyltransferase.